The chain runs to 747 residues: MDIPNPPTSKCITYWKRKVKSEYMRLRQLKRLQANMGAKALYVANFAKVQEKTQILNEEWKKLRVQPVQLMKPVSGHPFLKKCTIESIFPGFASQHMLMRSLNTVALVPIMYSWSPLQQNFMVEDETVLCNIPYMGDEVKEEDETFIEELINNYDGKVHGEEEMIPGSVLISDAVFLELVDALNQYSDEDEEGHNDTSDGKQDDSKEDLPVTRKRKRHAIEGSKKSSKKQFPNDMIFSAIASMFPENGVPDDMKERYRELTEMSDPNALPPQCTPNIDGPNAKSVQREQSLHSFHTLFCRRCFKYDCFLHPFHATPNVYKRKNKEIKIEPEPCGTDCFLLLEGAKEYAMLHNPRSKCSGRRRRRHHVVNASCSNTSASAVAETKEGDSDRDTGNDWASSSSEANSRCQTPTKQKASPAPPQLCVVEAPSEPVEWTGAEESLFRVFHGTYFNNFCSIARLLGTKTCKQVFQFAVKESLILKLPTDELMNPSQKKKRKHRLWAAHCRKIQLKKDNSSTQVYNYQPCDHPDRPCDSTCPCIMTQNFCEKFCQCNPDCQNRFPGCRCKTQCNTKQCPCYLAVRECDPDLCLTCGASEHWDCKVVSCKNCSIQRGLKKHLLLAPSDVAGWGTFIKESVQKNEFISEYCGELISQDEADRRGKVYDKYMSSFLFNLNNDFVVDATRKGNKIRFANHSVNPNCYAKVVMVNGDHRIGIFAKRAIQAGEELFFDYRYSQADALKYVGIERETDVL.

The segment at 186–229 is disordered; it reads YSDEDEEGHNDTSDGKQDDSKEDLPVTRKRKRHAIEGSKKSSKK. Residues 194–211 show a composition bias toward basic and acidic residues; the sequence is HNDTSDGKQDDSKEDLPV. Lys-327 participates in a covalent cross-link: Glycyl lysine isopeptide (Lys-Gly) (interchain with G-Cter in SUMO2). The interval 375-421 is disordered; it reads TSASAVAETKEGDSDRDTGNDWASSSSEANSRCQTPTKQKASPAPPQ. Over residues 382-393 the composition is skewed to basic and acidic residues; the sequence is ETKEGDSDRDTG. The segment covering 395–414 has biased composition (polar residues); that stretch reads DWASSSSEANSRCQTPTKQK. A CXC domain is found at 504 to 606; sequence CRKIQLKKDN…CKVVSCKNCS (103 aa). Residues 613–728 enclose the SET domain; sequence KHLLLAPSDV…AGEELFFDYR (116 aa).

This sequence belongs to the class V-like SAM-binding methyltransferase superfamily. Histone-lysine methyltransferase family. EZ subfamily. Component of the PRC2/EED-EZH1 complex, which includes EED, EZH1, SUZ12, RBBP4 and AEBP2. The PRC2/EED-EZH1 is less abundant than the PRC2/EED-EZH2 complex, has weak methyltransferase activity and compacts chromatin in the absence of the methyltransferase cofactor S-adenosyl-L-methionine (SAM). Interacts with EZHIP; the interaction blocks EZH1 methyltransferase activity.

The protein resides in the nucleus. It catalyses the reaction L-lysyl(27)-[histone H3] + 3 S-adenosyl-L-methionine = N(6),N(6),N(6)-trimethyl-L-lysyl(27)-[histone H3] + 3 S-adenosyl-L-homocysteine + 3 H(+). In terms of biological role, polycomb group (PcG) protein. Catalytic subunit of the PRC2/EED-EZH1 complex, which methylates 'Lys-27' of histone H3, leading to transcriptional repression of the affected target gene. Able to mono-, di- and trimethylate 'Lys-27' of histone H3 to form H3K27me1, H3K27me2 and H3K27me3, respectively. Required for embryonic stem cell derivation and self-renewal, suggesting that it is involved in safeguarding embryonic stem cell identity. Compared to EZH2-containing complexes, it is less abundant in embryonic stem cells, has weak methyltransferase activity and plays a less critical role in forming H3K27me3, which is required for embryonic stem cell identity and proper differentiation. This is Histone-lysine N-methyltransferase EZH1 (EZH1) from Bos taurus (Bovine).